A 220-amino-acid chain; its full sequence is Uracil-DNA glycosylase (220 aa).

The active-site Proton acceptor is the aspartate 65.

Belongs to the uracil-DNA glycosylase (UDG) superfamily. UNG family.

The protein resides in the cytoplasm. It carries out the reaction Hydrolyzes single-stranded DNA or mismatched double-stranded DNA and polynucleotides, releasing free uracil.. Functionally, excises uracil residues from the DNA which can arise as a result of misincorporation of dUMP residues by DNA polymerase or due to deamination of cytosine. This Amoebophilus asiaticus (strain 5a2) protein is Uracil-DNA glycosylase.